The following is a 470-amino-acid chain: Neuraminidase (470 aa).

Over 1–6 (MNPNQK) the chain is Intravirion. The helical transmembrane segment at 7–27 (IITIGSICMAIGIISLILQIG) threads the bilayer. An involved in apical transport and lipid raft association region spans residues 11 to 33 (GSICMAIGIISLILQIGNIISIW). Residues 28–470 (NIISIWVSHS…GAELPFTIDK (443 aa)) lie on the Virion surface side of the membrane. Residues 36–90 (HSIQTGSQNHTGICNQRIITYENSTWVNQTYVNISNTNVVAGKDTTSMTLAGNSS) form a hypervariable stalk region region. N-linked (GlcNAc...) asparagine; by host glycosylation is found at Asn44, Asn58, Asn63, Asn68, and Asn88. A head of neuraminidase region spans residues 91 to 470 (LCPIRGWAIY…GAELPFTIDK (380 aa)). Intrachain disulfides connect Cys92–Cys417, Cys124–Cys129, Cys184–Cys231, Cys233–Cys238, Cys279–Cys292, Cys281–Cys290, Cys318–Cys335, and Cys421–Cys447. Residue Arg118 participates in substrate binding. The N-linked (GlcNAc...) asparagine; by host glycan is linked to Asn146. The active-site Proton donor/acceptor is Asp151. Arg152 lines the substrate pocket. The N-linked (GlcNAc...) asparagine; by host glycan is linked to Asn235. 277–278 (EE) lines the substrate pocket. Position 293 (Arg293) interacts with substrate. The Ca(2+) site is built by Asp294, Gly298, and Asp324. Asn365 carries an N-linked (GlcNAc...) asparagine; by host glycan. Arg368 contributes to the substrate binding site. The Nucleophile role is filled by Tyr402. A glycan (N-linked (GlcNAc...) asparagine; by host) is linked at Asn455.

It belongs to the glycosyl hydrolase 34 family. In terms of assembly, homotetramer. Ca(2+) is required as a cofactor. Post-translationally, N-glycosylated.

The protein localises to the virion membrane. The protein resides in the host apical cell membrane. It carries out the reaction Hydrolysis of alpha-(2-&gt;3)-, alpha-(2-&gt;6)-, alpha-(2-&gt;8)- glycosidic linkages of terminal sialic acid residues in oligosaccharides, glycoproteins, glycolipids, colominic acid and synthetic substrates.. With respect to regulation, inhibited by the neuraminidase inhibitors zanamivir (Relenza) and oseltamivir (Tamiflu). These drugs interfere with the release of progeny virus from infected cells and are effective against all influenza strains. Resistance to neuraminidase inhibitors is quite rare. Catalyzes the removal of terminal sialic acid residues from viral and cellular glycoconjugates. Cleaves off the terminal sialic acids on the glycosylated HA during virus budding to facilitate virus release. Additionally helps virus spread through the circulation by further removing sialic acids from the cell surface. These cleavages prevent self-aggregation and ensure the efficient spread of the progeny virus from cell to cell. Otherwise, infection would be limited to one round of replication. Described as a receptor-destroying enzyme because it cleaves a terminal sialic acid from the cellular receptors. May facilitate viral invasion of the upper airways by cleaving the sialic acid moieties on the mucin of the airway epithelial cells. Likely to plays a role in the budding process through its association with lipid rafts during intracellular transport. May additionally display a raft-association independent effect on budding. Plays a role in the determination of host range restriction on replication and virulence. Sialidase activity in late endosome/lysosome traffic seems to enhance virus replication. The protein is Neuraminidase of Influenza A virus (strain A/Brazil/11/1978 H1N1).